The following is a 404-amino-acid chain: METTQTLRFKTKALAVLSKCYDHAQTHLKGGVLQVNLLSVNYGGPRLAAVANAGTAGLISFEVSPDAVAEWQNHQSPEEAPAAVSFRNLAYGRTCVLGKELFGSAVEQASLQFYKRPQGGSRPEFVKLTMEYDDKVSKSHHTCALMPYMPPASDRLRNEQMIGQVLLMPKTASSLQKWARQQGSGGVKVTLNPDLYVTTYTSGEACLTLDYKPLSVGPYEAFTGPVAKAQDVGAVEAHVVCSVAADSLAAALSLCRIPAVSVPILRFYRSGIIAVVAGLLTSAGDLPLDLSVILFNHASEEAAASTASEPEDKSPRVQPLGTGLQQRPRHTVSPSPSPPPPPRTPTWESPARPETPSPAIPSHSSNTALERPLAVQLARKRTSSEARQKQKHPKKVKQAFNPLI.

Residues 1–300 (METTQTLRFK…SVILFNHASE (300 aa)) form a homodimerization; DNA binding and DNA polymerase processivity region. Positions 301 to 404 (EAAASTASEP…KVKQAFNPLI (104 aa)) are transcriptional activation. The interval 302–404 (AAASTASEPE…KVKQAFNPLI (103 aa)) is disordered. Positions 335 to 344 (SPSPPPPPRT) are enriched in pro residues. Ser337 carries the phosphoserine modification. Position 344 is a phosphothreonine (Thr344). Ser349 carries the phosphoserine modification. Thr355 carries the phosphothreonine modification.

Belongs to the herpesviridae DNA polymerase accessory subunit family. As to quaternary structure, homodimer. Two dimers can adopt a tetrameric ring-like structure. Forms a complex with the DNA-binding protein BALF2, the DNA polymerase subunit BALF5, and the alkaline exonuclease BGLF5. Interacts (via N-terminus) with BZLF1 (via bZIP domain); this interaction may inhibit BZLF1-induced transcription of the BMRF1 promoter. Interacts (via C-terminus) with host NuRD complex; this interaction is important for transcriptional activation of EBV promoters and inhibition of the ubiquitination step of DDR signaling. In terms of processing, phosphorylated by the viral BGLF4 kinase.

It is found in the virion tegument. The protein localises to the host nucleus. Acts as a DNA polymerase processivity factor; a transcriptional activator for several EBV promoters and inhibits the host DNA damage response (DDR) to double-stranded DNA breaks. Plays an essential role in the viral lytic DNA replication by acting as a polymerase accessory subunit. Stimulates the viral DNA polymerase activity and appears to function with it as a holoenzyme. Increases the processivity of the viral polymerase, probably by acting as a sliding clamp that prevents dissociation of the polymerase from the active template. In addition, BMRF1 transcriptionally activates the oriLyt early BHLF1 promoter. Promotes G1/S cell cycle arrest through p53 induction. The chain is DNA polymerase processivity factor BMRF1 from Epstein-Barr virus (strain AG876) (HHV-4).